We begin with the raw amino-acid sequence, 423 residues long: Transcription factor IIIB 50 kDa subunit (423 aa).

The segment at 1-34 (MSKNCPECGSSRVVEDDLYSQKQWVCEDCGSVVS) adopts a TFIIB-type zinc-finger fold. Cysteine 5, cysteine 8, cysteine 26, and cysteine 29 together coordinate Zn(2+). Copy 2 of the repeat occupies 171 to 245 (LESFCYDFKL…LARMKYSLMK (75 aa)). Residues 325 to 340 (QTSQYSESELSDSKSS) are compositionally biased toward low complexity. The segment at 325–358 (QTSQYSESELSDSKSSVQTQCKSPPDEEDEGCEL) is disordered. Cysteine 373 carries the post-translational modification Cysteine sulfenic acid (-SOH).

This sequence belongs to the TFIIB family. In terms of assembly, component of TFIIIB complexes. Interacts with TBP and forms a ternary complex with TBp and target DNA sequences. In terms of processing, in response to oxidative stress, a Cys-residue is reversibly oxidized to cysteine sulfenic acid. This impairs formation of a ternary complex with TBP and DNA and down-regulates expression of target genes in response to oxidative stress.

The protein resides in the nucleus. Its function is as follows. General activator of RNA polymerase III transcription. Factor exclusively required for RNA polymerase III transcription of genes with promoter elements upstream of the initiation sites. Contributes to the regulation of gene expression; functions as activator in the absence of oxidative stress. Down-regulates expression of target genes in response to oxidative stress. Overexpression protects cells against apoptosis in response to oxidative stress. This is Transcription factor IIIB 50 kDa subunit (brf2) from Danio rerio (Zebrafish).